The following is an 806-amino-acid chain: Glycerol-3-phosphate acyltransferase (806 aa).

Residues 305–310 (CHRSHM) carry the HXXXXD motif motif.

This sequence belongs to the GPAT/DAPAT family.

The protein localises to the cell inner membrane. The enzyme catalyses sn-glycerol 3-phosphate + an acyl-CoA = a 1-acyl-sn-glycero-3-phosphate + CoA. The protein operates within phospholipid metabolism; CDP-diacylglycerol biosynthesis; CDP-diacylglycerol from sn-glycerol 3-phosphate: step 1/3. This Salmonella agona (strain SL483) protein is Glycerol-3-phosphate acyltransferase.